The primary structure comprises 383 residues: Putative glutamate--cysteine ligase 2-1 (383 aa).

Belongs to the glutamate--cysteine ligase type 2 family. YbdK subfamily.

The catalysed reaction is L-cysteine + L-glutamate + ATP = gamma-L-glutamyl-L-cysteine + ADP + phosphate + H(+). ATP-dependent carboxylate-amine ligase which exhibits weak glutamate--cysteine ligase activity. In Legionella pneumophila (strain Corby), this protein is Putative glutamate--cysteine ligase 2-1.